The chain runs to 487 residues: MKAQPKASHFIGGAFVEDKTGKPSPVIYPATGEEIARLYSATPDVIEAAYAAALKAQGEWAALKPVERGRILRRTADILREKNKKLSKLETLDTGKALQETLVADAASAADALEFFGGIISGFNGEFVELGGSFAYTRREALGICVGIGAWNYPIQIAAWKSAPALAMGNAFIFKPSENTPLSALALAEAYKEAGLPDGLFNVVQGFGDVGAALVNHRLTAKVSLTGSVPTGKRIMAQAGEHLKHVTMELGGKSPIIVFDDADIESAIGGAMLGNFYSTGQVCSNGTRVFVHKNLRERFVERLVERTRKIRIGDPLDEATQMGPLVNRAQRDKVLSYIEKGKAEGATLACGGGVPKLQGFDKGYFIEPTIFTDVTDDMTIAREEIFGPVMSVLEFSDEDEVIARANDTEFGLAAGVFTADIARGHRVIGQIKAGTCWINAYNLTPVEVPFGGYKQSGIGRENGIAALAHYSQIKTVYVEMGKVDSPY.

Residues I27 and D93 each contribute to the K(+) site. Position 149–151 (149–151 (GAW)) interacts with NAD(+). K161 serves as the catalytic Charge relay system. NAD(+)-binding positions include 175–178 (KPSE) and 228–231 (SVPT). L243 contributes to the K(+) binding site. Residue E249 is the Proton acceptor of the active site. 3 residues coordinate NAD(+): G251, C283, and E384. The active-site Nucleophile is C283. C283 is subject to Cysteine sulfenic acid (-SOH). Residues K454 and G457 each contribute to the K(+) site. E461 serves as the catalytic Charge relay system.

Belongs to the aldehyde dehydrogenase family. Dimer of dimers. Requires K(+) as cofactor.

The catalysed reaction is betaine aldehyde + NAD(+) + H2O = glycine betaine + NADH + 2 H(+). It functions in the pathway amine and polyamine biosynthesis; betaine biosynthesis via choline pathway; betaine from betaine aldehyde: step 1/1. In terms of biological role, involved in the biosynthesis of the osmoprotectant glycine betaine. Catalyzes the irreversible oxidation of betaine aldehyde to the corresponding acid. The sequence is that of Betaine aldehyde dehydrogenase from Brucella anthropi (strain ATCC 49188 / DSM 6882 / CCUG 24695 / JCM 21032 / LMG 3331 / NBRC 15819 / NCTC 12168 / Alc 37) (Ochrobactrum anthropi).